The following is a 290-amino-acid chain: Endo-1,4-beta-xylanase B (290 aa).

Positions 1-19 (MVSFNSLLVAVSAATCALA) are cleaved as a signal peptide. Asn-26 carries N-linked (GlcNAc...) asparagine glycosylation. The region spanning 34–222 (QSTPAGTGTN…SSGSSTVTVN (189 aa)) is the GH11 domain. Catalysis depends on Glu-118, which acts as the Nucleophile. The active-site Proton donor is Glu-209. The disordered stretch occupies residues 223–248 (PAGGVTSPIAPTGPSSVSTTPSGPSS). Residues 234 to 248 (TGPSSVSTTPSGPSS) show a composition bias toward low complexity. The region spanning 255 to 290 (TCSALYGQCGGQGWTGPTCCSSGTCKFSNNWYSQCL) is the CBM1 domain.

Belongs to the glycosyl hydrolase 11 (cellulase G) family.

The protein resides in the secreted. The enzyme catalyses Endohydrolysis of (1-&gt;4)-beta-D-xylosidic linkages in xylans.. It functions in the pathway glycan degradation; xylan degradation. Its function is as follows. Endo-1,4-beta-xylanase involved in the hydrolysis of xylan, a major structural heterogeneous polysaccharide found in plant biomass representing the second most abundant polysaccharide in the biosphere, after cellulose. The chain is Endo-1,4-beta-xylanase B (xynB) from Phanerodontia chrysosporium (White-rot fungus).